Reading from the N-terminus, the 871-residue chain is Speckle targeted PIP5K1A-regulated poly(A) polymerase (871 aa).

Residues 16–46 (FRCCLCHITTANQPSLDAHLGGRKHRHLVEL) form a Matrin-type zinc finger. In terms of domain architecture, RRM spans 56-128 (RSVFVSGFPR…RRLRVRPREQ (73 aa)). Serine 205 contacts ATP. Positions 216 and 218 each coordinate Mg(2+). UTP-binding residues include aspartate 216 and aspartate 218. A disordered region spans residues 252 to 321 (QALACTPASP…QEDQGDGDQG (70 aa)). Over residues 259 to 269 (ASPPDSQPPAS) the composition is skewed to pro residues. Asparagine 392 contacts ATP. Asparagine 392, arginine 414, tyrosine 432, and histidine 547 together coordinate UTP. The region spanning 489–547 (LSSLLAQFFSCVSCWDLRGSLLSLREGQALSVAGGLPSNLSEGLRLGPMNLQDPFDLSH) is the PAP-associated domain. The KA1; binds the bulging loops of U6 snRNA but is dispensable for terminal uridylyltransferase activity stretch occupies residues 596–871 (SSPSSILSAT…LPQALRNLLK (276 aa)). A disordered region spans residues 636–684 (GTKRLRSEGGGPGEPPQGGTSKRAKLDGQKKSCEEGPEEQQGCAGEHGE). The segment covering 659 to 669 (AKLDGQKKSCE) has biased composition (basic and acidic residues). The residue at position 748 (serine 748) is a Phosphoserine.

It belongs to the DNA polymerase type-B-like family. In terms of assembly, associates with the cleavage and polyadenylation specificity factor (CPSF) complex. Interacts with CPSF1 and CPSF3; the interaction is direct. Interacts with PIP5K1A. Mg(2+) serves as cofactor. It depends on Mn(2+) as a cofactor. Post-translationally, phosphorylated by CK1 in the proline-rich (Pro-rich) region.

Its subcellular location is the nucleus. It localises to the nucleolus. The protein resides in the nucleus speckle. It catalyses the reaction RNA(n) + UTP = RNA(n)-3'-uridine ribonucleotide + diphosphate. The catalysed reaction is RNA(n) + ATP = RNA(n)-3'-adenine ribonucleotide + diphosphate. Its activity is regulated as follows. Adenylyltransferase activity is specifically phosphatidylinositol 4,5-bisphosphate (PtdIns(4,5)P2). Functionally, poly(A) polymerase that creates the 3'-poly(A) tail of specific pre-mRNAs. Localizes to nuclear speckles together with PIP5K1A and mediates polyadenylation of a select set of mRNAs, such as HMOX1. In addition to polyadenylation, it is also required for the 3'-end cleavage of pre-mRNAs: binds to the 3'UTR of targeted pre-mRNAs and promotes the recruitment and assembly of the CPSF complex on the 3'UTR of pre-mRNAs. In addition to adenylyltransferase activity, also has uridylyltransferase activity. However, the ATP ratio is higher than UTP in cells, suggesting that it functions primarily as a poly(A) polymerase. Acts as a specific terminal uridylyltransferase for U6 snRNA in vitro: responsible for a controlled elongation reaction that results in the restoration of the four 3'-terminal UMP-residues found in newly transcribed U6 snRNA. Not involved in replication-dependent histone mRNA degradation. The sequence is that of Speckle targeted PIP5K1A-regulated poly(A) polymerase (TUT1) from Bos taurus (Bovine).